We begin with the raw amino-acid sequence, 425 residues long: Glutamyl-tRNA reductase (425 aa).

Residues 49-52 (TCNR), Ser-107, 112-114 (EPQ), and Gln-118 each bind substrate. Catalysis depends on Cys-50, which acts as the Nucleophile. 187–192 (GAGETI) is an NADP(+) binding site.

The protein belongs to the glutamyl-tRNA reductase family. In terms of assembly, homodimer.

It carries out the reaction (S)-4-amino-5-oxopentanoate + tRNA(Glu) + NADP(+) = L-glutamyl-tRNA(Glu) + NADPH + H(+). It participates in porphyrin-containing compound metabolism; protoporphyrin-IX biosynthesis; 5-aminolevulinate from L-glutamyl-tRNA(Glu): step 1/2. Catalyzes the NADPH-dependent reduction of glutamyl-tRNA(Glu) to glutamate 1-semialdehyde (GSA). The sequence is that of Glutamyl-tRNA reductase from Pseudomonas putida (strain ATCC 700007 / DSM 6899 / JCM 31910 / BCRC 17059 / LMG 24140 / F1).